Here is a 454-residue protein sequence, read N- to C-terminus: Cobyrinate a,c-diamide synthase (454 aa).

One can recognise a GATase cobBQ-type domain in the interval 247-442 (KIGIAMDSAF…IHAHWASNPN (196 aa)). C329 serves as the catalytic Nucleophile.

This sequence belongs to the CobB/CbiA family. It depends on Mg(2+) as a cofactor.

It catalyses the reaction cob(II)yrinate + 2 L-glutamine + 2 ATP + 2 H2O = cob(II)yrinate a,c diamide + 2 L-glutamate + 2 ADP + 2 phosphate + 2 H(+). The protein operates within cofactor biosynthesis; adenosylcobalamin biosynthesis; cob(II)yrinate a,c-diamide from sirohydrochlorin (anaerobic route): step 10/10. In terms of biological role, catalyzes the ATP-dependent amidation of the two carboxylate groups at positions a and c of cobyrinate, using either L-glutamine or ammonia as the nitrogen source. This chain is Cobyrinate a,c-diamide synthase, found in Leptospira interrogans serogroup Icterohaemorrhagiae serovar Lai (strain 56601).